The primary structure comprises 604 residues: Elongation factor 4 (604 aa).

Positions 2–184 (DHIRNFSIIA…AVITRMPAPR (183 aa)) constitute a tr-type G domain. GTP contacts are provided by residues 14 to 19 (DHGKST) and 131 to 134 (NKMD).

It belongs to the TRAFAC class translation factor GTPase superfamily. Classic translation factor GTPase family. LepA subfamily.

It localises to the cell inner membrane. It catalyses the reaction GTP + H2O = GDP + phosphate + H(+). Required for accurate and efficient protein synthesis under certain stress conditions. May act as a fidelity factor of the translation reaction, by catalyzing a one-codon backward translocation of tRNAs on improperly translocated ribosomes. Back-translocation proceeds from a post-translocation (POST) complex to a pre-translocation (PRE) complex, thus giving elongation factor G a second chance to translocate the tRNAs correctly. Binds to ribosomes in a GTP-dependent manner. The polypeptide is Elongation factor 4 (Methylibium petroleiphilum (strain ATCC BAA-1232 / LMG 22953 / PM1)).